The sequence spans 341 residues: tRNA N6-adenosine threonylcarbamoyltransferase (341 aa).

Fe cation is bound by residues histidine 111 and histidine 115. Substrate contacts are provided by residues 134-138, aspartate 167, glycine 180, and asparagine 272; that span reads LVSGG. Aspartate 300 lines the Fe cation pocket.

It belongs to the KAE1 / TsaD family. It depends on Fe(2+) as a cofactor.

The protein resides in the cytoplasm. It carries out the reaction L-threonylcarbamoyladenylate + adenosine(37) in tRNA = N(6)-L-threonylcarbamoyladenosine(37) in tRNA + AMP + H(+). Functionally, required for the formation of a threonylcarbamoyl group on adenosine at position 37 (t(6)A37) in tRNAs that read codons beginning with adenine. Is involved in the transfer of the threonylcarbamoyl moiety of threonylcarbamoyl-AMP (TC-AMP) to the N6 group of A37, together with TsaE and TsaB. TsaD likely plays a direct catalytic role in this reaction. This Edwardsiella ictaluri (strain 93-146) protein is tRNA N6-adenosine threonylcarbamoyltransferase.